A 62-amino-acid polypeptide reads, in one-letter code: UPF0434 protein Arad_4458 (62 aa).

This sequence belongs to the UPF0434 family.

This is UPF0434 protein Arad_4458 from Rhizobium rhizogenes (strain K84 / ATCC BAA-868) (Agrobacterium radiobacter).